The chain runs to 116 residues: Large ribosomal subunit protein bL19 (116 aa).

It belongs to the bacterial ribosomal protein bL19 family.

In terms of biological role, this protein is located at the 30S-50S ribosomal subunit interface and may play a role in the structure and function of the aminoacyl-tRNA binding site. This is Large ribosomal subunit protein bL19 from Pseudomonas savastanoi pv. phaseolicola (strain 1448A / Race 6) (Pseudomonas syringae pv. phaseolicola (strain 1448A / Race 6)).